Reading from the N-terminus, the 250-residue chain is Small ribosomal subunit protein uS2 (250 aa).

Belongs to the universal ribosomal protein uS2 family.

The protein is Small ribosomal subunit protein uS2 of Polaromonas sp. (strain JS666 / ATCC BAA-500).